A 458-amino-acid polypeptide reads, in one-letter code: Fasciclin-like arabinogalactan protein 17 (458 aa).

The first 30 residues, 1–30, serve as a signal peptide directing secretion; that stretch reads MDRRIYGGSAVIHLFLFFSVLIFSAASALS. Residues 43 to 184 form the FAS1 1 domain; the sequence is NSNSVLVALL…GLIHGIERLL (142 aa). An N-linked (GlcNAc...) asparagine glycan is attached at Asn-80. Residues 207 to 262 are disordered; that stretch reads PEGAPEVDPRTNRLKKPAAPVPAGSPPALPIQSAMAPGPSLAPAPAPGPGGKQHHF. The segment covering 225–235 has biased composition (pro residues); sequence APVPAGSPPAL. One can recognise an FAS1 2 domain in the interval 268–411; it reads VKDFIHTLLH…ISVQGIDGVL (144 aa). N-linked (GlcNAc...) asparagine glycosylation is present at Asn-290.

This sequence belongs to the fasciclin-like AGP family.

The protein localises to the secreted. Functionally, may be a cell surface adhesion protein. This is Fasciclin-like arabinogalactan protein 17 (FLA17) from Arabidopsis thaliana (Mouse-ear cress).